Consider the following 525-residue polypeptide: Sensory neuron membrane protein 1 (525 aa).

Topologically, residues 1–11 (MLLPKPLKYAA) are cytoplasmic. Residues 12-32 (IGGGVFVFGILIGWVIFPVIL) form a helical membrane-spanning segment. The Extracellular portion of the chain corresponds to 33–456 (KSQIKKEMAL…LKHQLFIPKR (424 aa)). N-linked (GlcNAc...) asparagine glycosylation is found at Asn-67, Asn-105, and Asn-229. Intrachain disulfides connect Cys-268/Cys-333, Cys-297/Cys-352, and Cys-335/Cys-341. The N-linked (GlcNAc...) asparagine glycan is linked to Asn-440. Residues 457-477 (IVGVIRWWMVSFGLIAVLAGV) traverse the membrane as a helical segment. Over 478 to 525 (MYHFKDNIMGWAAKGESTTAKVNPEDGSNEQRGVSVIGQDREPPKVTM) the chain is Cytoplasmic. The interval 496–525 (TAKVNPEDGSNEQRGVSVIGQDREPPKVTM) is disordered. Positions 516–525 (QDREPPKVTM) are enriched in basic and acidic residues.

This sequence belongs to the CD36 family. Principal component of the olfactory cilia membrane. Localizes to the somata, dendritic neck and cilia of the olfactory neurons (at protein level). Not detected in the axons of ORNs, the cytoplasm of auxiliary cells or non-sensory structures. Expression is universal among ORNs but differential between neuron and sensillum types.

It is found in the cell membrane. In terms of biological role, plays an olfactory role that is not restricted to pheromone sensitivity. May be involved in the odor detection properties of the olfactory receptor neurons (ORNs) rather than their differentiation and growth. The sequence is that of Sensory neuron membrane protein 1 from Antheraea polyphemus (Polyphemus moth).